Consider the following 139-residue polypeptide: uncharacterized protein (139 aa).

Residues 8–63 form the HTH cro/C1-type domain; sequence LRELRRARKLTVNQLAVYSGISSATISKIENGKRGTPKPATIKKLAAVLKVPYENL. The H-T-H motif DNA-binding region spans 19-38; sequence VNQLAVYSGISSATISKIEN.

This is an uncharacterized protein from Bacillus subtilis (strain 168).